The chain runs to 348 residues: Probable malate dehydrogenase 2, mitochondrial (348 aa).

The transit peptide at 1–9 directs the protein to the mitochondrion; that stretch reads MNKILTRSF. 31 to 37 contributes to the NAD(+) binding site; that stretch reads GASGQIG. Positions 112 and 118 each coordinate substrate. NAD(+) is bound by residues asparagine 125, glutamine 132, and 150 to 152; that span reads VGN. Residues asparagine 152 and arginine 183 each coordinate substrate. The active-site Proton acceptor is the histidine 208.

This sequence belongs to the LDH/MDH superfamily. MDH type 2 family. As to quaternary structure, homodimer.

It is found in the mitochondrion. The catalysed reaction is (S)-malate + NAD(+) = oxaloacetate + NADH + H(+). Catalyzes the reversible oxidation of malate to oxaloacetate. In Dictyostelium discoideum (Social amoeba), this protein is Probable malate dehydrogenase 2, mitochondrial (mdhB).